The sequence spans 133 residues: Hexon-interlacing protein (133 aa).

Positions 97–127 (REEDALSVVLTRMEELSQQLQDLFAKVALLN) form a coiled coil.

The protein belongs to the adenoviridae hexon-interlacing protein family. As to quaternary structure, homotrimer. Interacts with hexon protein; this interaction tethers the hexons together. Self-interacts with adjacent proteins. Interacts with kinesin light chain KLC1; this interaction leads to capsid disruption at the nuclear pore complex during virus entry into host cell.

It localises to the virion. The protein localises to the host nucleus. Its function is as follows. Structural component of the virion that acts as a cement protein on the capsid exterior and forms triskelion structures consisting of three molecules that stabilize three hexon trimers at the center of each icosahedral facet and fixes the peripentonal hexons. Dispensable for assembly. During virus entry, recruits the anterograde motor kinesin-1 to the capsid docked at the nuclear pore complex thereby subjecting the docked capsid to a pulling force. The resulting tension leads to capsid disruption, dispersion of capsid fragments toward cell periphery and eventually viral DNA entry into the host nucleus. In Homo sapiens (Human), this protein is Hexon-interlacing protein.